The sequence spans 295 residues: Ribosomal RNA small subunit methyltransferase A (295 aa).

S-adenosyl-L-methionine is bound by residues asparagine 29, leucine 31, glycine 56, glutamate 77, aspartate 102, and asparagine 127.

Belongs to the class I-like SAM-binding methyltransferase superfamily. rRNA adenine N(6)-methyltransferase family. RsmA subfamily.

It localises to the cytoplasm. It carries out the reaction adenosine(1518)/adenosine(1519) in 16S rRNA + 4 S-adenosyl-L-methionine = N(6)-dimethyladenosine(1518)/N(6)-dimethyladenosine(1519) in 16S rRNA + 4 S-adenosyl-L-homocysteine + 4 H(+). Specifically dimethylates two adjacent adenosines (A1518 and A1519) in the loop of a conserved hairpin near the 3'-end of 16S rRNA in the 30S particle. May play a critical role in biogenesis of 30S subunits. The polypeptide is Ribosomal RNA small subunit methyltransferase A (Anoxybacillus flavithermus (strain DSM 21510 / WK1)).